The primary structure comprises 105 residues: Thioredoxin (105 aa).

The Thioredoxin domain occupies 1–105 (MFELDKDTFE…NVEAMVKKYI (105 aa)). A disulfide bond links Cys29 and Cys32.

This sequence belongs to the thioredoxin family.

In terms of biological role, participates in various redox reactions through the reversible oxidation of its active center dithiol to a disulfide and catalyzes dithiol-disulfide exchange reactions. The sequence is that of Thioredoxin (trxA) from Acetoanaerobium sticklandii (strain ATCC 12662 / DSM 519 / JCM 1433 / CCUG 9281 / NCIMB 10654 / HF) (Clostridium sticklandii).